We begin with the raw amino-acid sequence, 160 residues long: Transcription antitermination protein NusB (160 aa).

The protein belongs to the NusB family.

Functionally, involved in transcription antitermination. Required for transcription of ribosomal RNA (rRNA) genes. Binds specifically to the boxA antiterminator sequence of the ribosomal RNA (rrn) operons. In Rhizobium etli (strain ATCC 51251 / DSM 11541 / JCM 21823 / NBRC 15573 / CFN 42), this protein is Transcription antitermination protein NusB.